Reading from the N-terminus, the 178-residue chain is MAELTTLARPYAKAAFEHAQAHQQLANWSAMLGLAAAVSQDDTMQRMLKAPRLTSAQKATTFIEVCGEKFDAKAQNFIHVVAENDRLPLLPEIAELFDLYKAEQEKSVDVDVTSAFALNQEQQDKLAKVLSARLGREVRLHAAEDASLIGGVVIRAGDLVIDGSVRGKIAKLAEALKS.

This sequence belongs to the ATPase delta chain family. As to quaternary structure, F-type ATPases have 2 components, F(1) - the catalytic core - and F(0) - the membrane proton channel. F(1) has five subunits: alpha(3), beta(3), gamma(1), delta(1), epsilon(1). F(0) has three main subunits: a(1), b(2) and c(10-14). The alpha and beta chains form an alternating ring which encloses part of the gamma chain. F(1) is attached to F(0) by a central stalk formed by the gamma and epsilon chains, while a peripheral stalk is formed by the delta and b chains.

The protein localises to the cell inner membrane. Its function is as follows. F(1)F(0) ATP synthase produces ATP from ADP in the presence of a proton or sodium gradient. F-type ATPases consist of two structural domains, F(1) containing the extramembraneous catalytic core and F(0) containing the membrane proton channel, linked together by a central stalk and a peripheral stalk. During catalysis, ATP synthesis in the catalytic domain of F(1) is coupled via a rotary mechanism of the central stalk subunits to proton translocation. In terms of biological role, this protein is part of the stalk that links CF(0) to CF(1). It either transmits conformational changes from CF(0) to CF(1) or is implicated in proton conduction. The polypeptide is ATP synthase subunit delta (Pseudomonas syringae pv. syringae (strain B728a)).